A 726-amino-acid chain; its full sequence is Catalase-peroxidase (726 aa).

The tract at residues 1–33 (MSTSDDIHNTTATGKCPFHQGGHDQSAGGGTTT) is disordered. Positions 105-226 (WHGAGTYRSI…LGATEMGLIY (122 aa)) form a cross-link, tryptophyl-tyrosyl-methioninium (Trp-Tyr) (with M-252). His-106 (proton acceptor) is an active-site residue. The tryptophyl-tyrosyl-methioninium (Tyr-Met) (with W-105) cross-link spans 226–252 (YVNPEGPDHSGEPLSAAAAIRATFGNM). Position 267 (His-267) interacts with heme b.

The protein belongs to the peroxidase family. Peroxidase/catalase subfamily. As to quaternary structure, homodimer or homotetramer. Heme b serves as cofactor. In terms of processing, formation of the three residue Trp-Tyr-Met cross-link is important for the catalase, but not the peroxidase activity of the enzyme.

The enzyme catalyses H2O2 + AH2 = A + 2 H2O. It catalyses the reaction 2 H2O2 = O2 + 2 H2O. Bifunctional enzyme with both catalase and broad-spectrum peroxidase activity. The sequence is that of Catalase-peroxidase from Escherichia coli (strain UTI89 / UPEC).